Reading from the N-terminus, the 187-residue chain is Elongation factor P (187 aa).

It belongs to the elongation factor P family.

It localises to the cytoplasm. The protein operates within protein biosynthesis; polypeptide chain elongation. Functionally, involved in peptide bond synthesis. Stimulates efficient translation and peptide-bond synthesis on native or reconstituted 70S ribosomes in vitro. Probably functions indirectly by altering the affinity of the ribosome for aminoacyl-tRNA, thus increasing their reactivity as acceptors for peptidyl transferase. The chain is Elongation factor P from Desulfosudis oleivorans (strain DSM 6200 / JCM 39069 / Hxd3) (Desulfococcus oleovorans).